We begin with the raw amino-acid sequence, 290 residues long: Lysine export transcriptional regulatory protein LysG (290 aa).

In terms of domain architecture, HTH lysR-type spans 1-57 (MNPIQLDTLLSIIDEGSFEGASLALSISPSAVSQRVKALEHHVGRVLVSRTQPAKAT). The H-T-H motif DNA-binding region spans 18 to 37 (FEGASLALSISPSAVSQRVK).

The protein belongs to the LysR transcriptional regulatory family.

Its function is as follows. Positively regulates the expression of the exporter LysE. Induction requires the presence of a coinducer, which is either intracellular L-lysine, L-arginine or L-citrulline. L-histidine also acts as a coinducer of lysE expression, but this amino acid is not exported by LysE. The lysEG system prevents bacteriostasis due to elevated L-lysine or L-arginine concentrations that arise during growth in the presence of peptides or in mutants possessing a deregulated biosynthesis pathway. This Corynebacterium glutamicum (strain ATCC 13032 / DSM 20300 / JCM 1318 / BCRC 11384 / CCUG 27702 / LMG 3730 / NBRC 12168 / NCIMB 10025 / NRRL B-2784 / 534) protein is Lysine export transcriptional regulatory protein LysG.